The sequence spans 223 residues: Octanoyltransferase (223 aa).

In terms of domain architecture, BPL/LPL catalytic spans 35–214 (GEARELIWLL…HFPAMLAGLR (180 aa)). Substrate contacts are provided by residues 74 to 81 (RGGRYTYH), 145 to 147 (AIG), and 158 to 160 (GFS). Residue Cys-176 is the Acyl-thioester intermediate of the active site.

This sequence belongs to the LipB family.

The protein localises to the cytoplasm. It catalyses the reaction octanoyl-[ACP] + L-lysyl-[protein] = N(6)-octanoyl-L-lysyl-[protein] + holo-[ACP] + H(+). It participates in protein modification; protein lipoylation via endogenous pathway; protein N(6)-(lipoyl)lysine from octanoyl-[acyl-carrier-protein]: step 1/2. Its function is as follows. Catalyzes the transfer of endogenously produced octanoic acid from octanoyl-acyl-carrier-protein onto the lipoyl domains of lipoate-dependent enzymes. Lipoyl-ACP can also act as a substrate although octanoyl-ACP is likely to be the physiological substrate. The chain is Octanoyltransferase from Rhizorhabdus wittichii (strain DSM 6014 / CCUG 31198 / JCM 15750 / NBRC 105917 / EY 4224 / RW1) (Sphingomonas wittichii).